We begin with the raw amino-acid sequence, 367 residues long: Glutamate 5-kinase (367 aa).

Residue K10 participates in ATP binding. 3 residues coordinate substrate: S50, D137, and N149. ATP-binding positions include T169–D170 and T211–K217. The PUA domain maps to A275–E353.

Belongs to the glutamate 5-kinase family.

The protein localises to the cytoplasm. It catalyses the reaction L-glutamate + ATP = L-glutamyl 5-phosphate + ADP. It participates in amino-acid biosynthesis; L-proline biosynthesis; L-glutamate 5-semialdehyde from L-glutamate: step 1/2. In terms of biological role, catalyzes the transfer of a phosphate group to glutamate to form L-glutamate 5-phosphate. The polypeptide is Glutamate 5-kinase (Salmonella paratyphi A (strain ATCC 9150 / SARB42)).